The chain runs to 214 residues: Large ribosomal subunit protein eL14 (214 aa).

Lys79 bears the N6-acetyllysine mark. The residue at position 85 (Lys85) is an N6-acetyllysine; alternate. Lys85 bears the N6-succinyllysine; alternate mark. Residue Lys124 forms a Glycyl lysine isopeptide (Lys-Gly) (interchain with G-Cter in SUMO2) linkage. The residue at position 139 (Ser139) is a Phosphoserine. Positions 161–214 (PAKKITTEGKKAPAQKAPAQKAAGQKAAPPPKTQKGQKAPSQKAPAPKASGKKA) are disordered. The 1-1; approximate repeat unit spans residues 170–174 (KKAPA). A 4 X 5 AA tandem repeats of Q-K-A-[APS]-X region spans residues 170–189 (KKAPAQKAPAQKAAGQKAAP). Residues 172–214 (APAQKAPAQKAAGQKAAPPPKTQKGQKAPSQKAPAPKASGKKA) are compositionally biased toward low complexity. Repeat copies occupy residues 175–179 (QKAPA), 180–184 (QKAAG), 185–189 (QKAAP), 192–194 (KTQ), and 195–197 (KGQ). The segment at 192-197 (KTQKGQ) is 2 X 3 AA tandem repeats of K-G-Q. Lys203 carries the N6-succinyllysine modification.

Belongs to the eukaryotic ribosomal protein eL14 family. Component of the large ribosomal subunit.

It is found in the cytoplasm. Component of the large ribosomal subunit. The ribosome is a large ribonucleoprotein complex responsible for the synthesis of proteins in the cell. In Bos taurus (Bovine), this protein is Large ribosomal subunit protein eL14 (RPL14).